The primary structure comprises 293 residues: Mitochondrial inner membrane protease atp23 (293 aa).

The disordered stretch occupies residues 1–51 (MSPAPTTSAGPASSGIPPSSLPTSTVTEDDTKPSSSSSKANDLLPRYLTND). Residues 8-22 (SAGPASSGIPPSSLP) show a composition bias toward low complexity. His-190 is an a divalent metal cation binding site. The active site involves Glu-191. His-194 lines the a divalent metal cation pocket.

This sequence belongs to the peptidase M76 family.

It localises to the mitochondrion inner membrane. Functionally, has a dual role in the assembly of mitochondrial ATPase. Acts as a protease that removes N-terminal residues of mitochondrial ATPase CF(0) subunit 6 at the intermembrane space side. Also involved in the correct assembly of the membrane-embedded ATPase CF(0) particle, probably mediating association of subunit 6 with the subunit 9 ring. In Neurospora crassa (strain ATCC 24698 / 74-OR23-1A / CBS 708.71 / DSM 1257 / FGSC 987), this protein is Mitochondrial inner membrane protease atp23 (atp23).